A 310-amino-acid polypeptide reads, in one-letter code: tRNA dimethylallyltransferase (310 aa).

Gly10 to Ser17 lines the ATP pocket. Residue Thr12 to Ser17 participates in substrate binding. Interaction with substrate tRNA stretches follow at residues Asp35–Gln38, Gln159–Arg163, and Lys274–Arg281.

This sequence belongs to the IPP transferase family. In terms of assembly, monomer. The cofactor is Mg(2+).

The catalysed reaction is adenosine(37) in tRNA + dimethylallyl diphosphate = N(6)-dimethylallyladenosine(37) in tRNA + diphosphate. In terms of biological role, catalyzes the transfer of a dimethylallyl group onto the adenine at position 37 in tRNAs that read codons beginning with uridine, leading to the formation of N6-(dimethylallyl)adenosine (i(6)A). The polypeptide is tRNA dimethylallyltransferase (Halorhodospira halophila (strain DSM 244 / SL1) (Ectothiorhodospira halophila (strain DSM 244 / SL1))).